A 413-amino-acid chain; its full sequence is MAPPSVFAEVPQAQPVLVFKLIADFREDPDPRKVNLGVGAYRTDDCQPWVLPVVRKVEQRIANDSSLNHEYLPILGLAEFRTCASRLALGDDSPALQEKRVGGVQSLGGTGALRIGAEFLARWYNGTNNKDTPVYVSSPTWENHNGVFTTAGFKDIRSYRYWDTEKRGLDLQGFLSDLENAPEFSIFVLHACAHNPTGTDPTPEQWKQIASVMKRRFLFPFFDSAYQGFASGNLEKDAWAIRYFVSEGFELFCAQSFSKNFGLYNERVGNLTVVAKEPDSILRVLSQMEKIVRVTWSNPPAQGARIVARTLSDPELFHEWTGNVKTMADRILSMRSELRARLEALKTPGTWNHITDQIGMFSFTGLNPKQVEYLINEKHIYLLPSGRINMCGLTTKNLDYVATSIHEAVTKIQ.

L-aspartate-binding residues include Gly39, Trp141, and Asn195. Residue Lys259 is modified to N6-(pyridoxal phosphate)lysine. Arg387 contributes to the L-aspartate binding site.

It belongs to the class-I pyridoxal-phosphate-dependent aminotransferase family. In terms of assembly, homodimer. It depends on pyridoxal 5'-phosphate as a cofactor.

It localises to the cytoplasm. It carries out the reaction L-aspartate + 2-oxoglutarate = oxaloacetate + L-glutamate. The enzyme catalyses L-cysteine + 2-oxoglutarate = 2-oxo-3-sulfanylpropanoate + L-glutamate. It catalyses the reaction (2S)-2-aminobutanoate + 2-oxoglutarate = 2-oxobutanoate + L-glutamate. The catalysed reaction is 3-sulfino-L-alanine + 2-oxoglutarate = 3-sulfinopyruvate + L-glutamate. Functionally, biosynthesis of L-glutamate from L-aspartate or L-cysteine. Important regulator of levels of glutamate, the major excitatory neurotransmitter of the vertebrate central nervous system. Acts as a scavenger of glutamate in brain neuroprotection. The aspartate aminotransferase activity is involved in hepatic glucose synthesis during development and in adipocyte glyceroneogenesis. Using L-cysteine as substrate, regulates levels of mercaptopyruvate, an important source of hydrogen sulfide. Mercaptopyruvate is converted into H(2)S via the action of 3-mercaptopyruvate sulfurtransferase (3MST). Hydrogen sulfide is an important synaptic modulator and neuroprotectant in the brain. The protein is Aspartate aminotransferase, cytoplasmic of Sus scrofa (Pig).